The primary structure comprises 440 residues: Gap junction alpha-8 protein (440 aa).

Residues 2 to 12 (GDWSFLGNILE) lie within the membrane without spanning it. Residues 13–21 (EVNEHSTVI) are Cytoplasmic-facing. The helical transmembrane segment at 22 to 42 (GRVWLTVLFIFRILILGTAAE) threads the bilayer. The Extracellular portion of the chain corresponds to 43–71 (FVWGDEQSDFVCNTQQPGCENVCYDEAFP). 3 cysteine pairs are disulfide-bonded: cysteine 54/cysteine 201, cysteine 61/cysteine 195, and cysteine 65/cysteine 190. A helical membrane pass occupies residues 72–92 (ISHIRLWVLQIIFVSTPSLMY). The Cytoplasmic segment spans residues 93–161 (VGHAVHHVRM…GTLLRTYVCH (69 aa)). Positions 111–143 (AEELCQQSRSNGGERVPIAPDQASIRKSSSSSK) are disordered. Residues 162–182 (IIFKTLFEVGFIVGHYFLYGF) traverse the membrane as a helical segment. The Extracellular portion of the chain corresponds to 183-210 (RILPLYRCSRWPCPNVVDCFVSRPTEKT). The helical transmembrane segment at 211–231 (IFILFMLSVAFVSLFLNIMEM) threads the bilayer. Over 232 to 440 (SHLGMKGIRS…SRARSDDLTI (209 aa)) the chain is Cytoplasmic. The tract at residues 334–440 (GAQEVEREEQ…SRARSDDLTI (107 aa)) is disordered. Composition is skewed to basic and acidic residues over residues 353–364 (VGEKKQEAEKVA) and 375–399 (DGEK…EKVT). The span at 423-432 (LSRLSKASSR) shows a compositional bias: low complexity.

Belongs to the connexin family. Alpha-type (group II) subfamily. In terms of assembly, a hemichannel or connexon is composed of a hexamer of connexins. A functional gap junction is formed by the apposition of two hemichannels. Forms heteromeric channels with GJA3. In terms of tissue distribution, detected in eye lens (at protein level).

The protein localises to the cell membrane. Its subcellular location is the cell junction. The protein resides in the gap junction. Functionally, structural component of eye lens gap junctions. Gap junctions are dodecameric channels that connect the cytoplasm of adjoining cells. They are formed by the docking of two hexameric hemichannels, one from each cell membrane. Small molecules and ions diffuse from one cell to a neighboring cell via the central pore. In Rattus norvegicus (Rat), this protein is Gap junction alpha-8 protein (Gja8).